The primary structure comprises 27 residues: Ganodermin (27 aa).

Functionally, has antifungal activity against B.cinera, F.oxysporum and P.piricola with IC(50) values of 15.2 uM, 12.4 uM and 18.1 uM, respectively. Lacks hemagglutinating activity towards rabbit erythrocytes. Lacks deoxyribonuclease, ribonuclease and protease inhibitory activities. The protein is Ganodermin of Ganoderma lucidum (Ling zhi medicinal fungus).